The following is a 351-amino-acid chain: Adenine deaminase (351 aa).

Zn(2+)-binding residues include His19, His21, and His208. Residue Glu211 is the Proton donor of the active site. Asp288 contributes to the Zn(2+) binding site. Asp289 is a substrate binding site.

Belongs to the metallo-dependent hydrolases superfamily. Adenosine and AMP deaminases family. Adenine deaminase type 2 subfamily. The cofactor is Zn(2+).

It localises to the cytoplasm. The protein resides in the nucleus. It catalyses the reaction adenine + H2O + H(+) = hypoxanthine + NH4(+). Functionally, catalyzes the hydrolytic deamination of adenine to hypoxanthine. Plays an important role in the purine salvage pathway and in nitrogen catabolism. In Aspergillus oryzae (strain ATCC 42149 / RIB 40) (Yellow koji mold), this protein is Adenine deaminase (aah1).